The chain runs to 389 residues: Probable dual-specificity RNA methyltransferase RlmN (389 aa).

The segment at 1–23 (MTTQHPDTPETGITPGGTSGAFR) is disordered. The Proton acceptor role is filled by E127. The Radical SAM core domain maps to 133-376 (YPTRTTLCIS…ATLRDTRGQD (244 aa)). The cysteines at positions 140 and 381 are disulfide-linked. C147, C151, and C154 together coordinate [4Fe-4S] cluster. S-adenosyl-L-methionine-binding positions include 202-203 (GE), S236, 259-261 (SLH), and N338. The active-site S-methylcysteine intermediate is C381.

Belongs to the radical SAM superfamily. RlmN family. [4Fe-4S] cluster serves as cofactor.

It is found in the cytoplasm. It carries out the reaction adenosine(2503) in 23S rRNA + 2 reduced [2Fe-2S]-[ferredoxin] + 2 S-adenosyl-L-methionine = 2-methyladenosine(2503) in 23S rRNA + 5'-deoxyadenosine + L-methionine + 2 oxidized [2Fe-2S]-[ferredoxin] + S-adenosyl-L-homocysteine. It catalyses the reaction adenosine(37) in tRNA + 2 reduced [2Fe-2S]-[ferredoxin] + 2 S-adenosyl-L-methionine = 2-methyladenosine(37) in tRNA + 5'-deoxyadenosine + L-methionine + 2 oxidized [2Fe-2S]-[ferredoxin] + S-adenosyl-L-homocysteine. In terms of biological role, specifically methylates position 2 of adenine 2503 in 23S rRNA and position 2 of adenine 37 in tRNAs. In Bifidobacterium longum (strain NCC 2705), this protein is Probable dual-specificity RNA methyltransferase RlmN.